The primary structure comprises 166 residues: Succinate dehydrogenase assembly factor 2, mitochondrial (166 aa).

Residues 1 to 29 (MAVVAVFPALARMLAVSRRRLVSPSLSMT) constitute a mitochondrion transit peptide.

It belongs to the SDHAF2 family. In terms of assembly, interacts with SDHA within the SDH catalytic dimer.

The protein resides in the mitochondrion matrix. In terms of biological role, plays an essential role in the assembly of succinate dehydrogenase (SDH), an enzyme complex (also referred to as respiratory complex II) that is a component of both the tricarboxylic acid (TCA) cycle and the mitochondrial electron transport chain, and which couples the oxidation of succinate to fumarate with the reduction of ubiquinone (coenzyme Q) to ubiquinol. Required for flavinylation (covalent attachment of FAD) of the flavoprotein subunit SDHA of the SDH catalytic dimer. In Bos taurus (Bovine), this protein is Succinate dehydrogenase assembly factor 2, mitochondrial.